Here is a 75-residue protein sequence, read N- to C-terminus: uncharacterized protein (75 aa).

Residues 1-75 (MIKIYSTPTC…KAEIDKLIEK (75 aa)) enclose the Glutaredoxin domain. Residues Cys10 and Cys13 are joined by a disulfide bond.

It belongs to the glutaredoxin family.

This is an uncharacterized protein from Clostridium pasteurianum.